A 536-amino-acid polypeptide reads, in one-letter code: Probable E3 ubiquitin-protein ligase ARI13 (536 aa).

Residues 83–328 are TRIAD supradomain; sequence KISSCGICFK…GFYKFCNVSM (246 aa). Positions 87, 90, 106, 108, 111, 114, 135, 140, 180, 185, 210, 212, 217, 220, 225, 230, 277, 280, 297, 299, 304, 307, 314, and 324 each coordinate Zn(2+). The RING-type 1 zinc-finger motif lies at 87-140; it reads CGICFKTCDDGDYLISTPFCSHMFCKSCWRKYLEKNFYLVEKTQTRISCPHGAC. Residues 158 to 230 form an IBR-type zinc finger; sequence EMYVEYILRS…MLESHKPVTC (73 aa). The RING-type 2; atypical zinc finger occupies 277-307; sequence CPHCLRPADLGTKQYLRFLTCACNGRFCWKC. A RanBP2-type zinc finger spans residues 495–526; sequence DYGGLFWLCDRCTYGNTWFHKECLMCSDDIAA.

Belongs to the RBR family. Ariadne subfamily. Requires Zn(2+) as cofactor.

It catalyses the reaction [E2 ubiquitin-conjugating enzyme]-S-ubiquitinyl-L-cysteine + [acceptor protein]-L-lysine = [E2 ubiquitin-conjugating enzyme]-L-cysteine + [acceptor protein]-N(6)-ubiquitinyl-L-lysine.. Its pathway is protein modification; protein ubiquitination. In terms of biological role, might act as an E3 ubiquitin-protein ligase, or as part of E3 complex, which accepts ubiquitin from specific E2 ubiquitin-conjugating enzymes and then transfers it to substrates. In Arabidopsis thaliana (Mouse-ear cress), this protein is Probable E3 ubiquitin-protein ligase ARI13 (ARI13).